An 880-amino-acid chain; its full sequence is Replication origin-binding protein (880 aa).

Residues proline 60 to histidine 225 enclose the Helicase ATP-binding domain. Alanine 73–threonine 80 provides a ligand contact to ATP. The segment at proline 260 to glutamate 287 is disordered.

The protein belongs to the herpesviridae OriBP family. As to quaternary structure, homodimer. Interacts with the major DNA-binding protein. Interacts with the DNA helicase/primase complex-associated protein and the polymerase accessory protein.

It localises to the host nucleus. Functions as a docking protein to recruit essential components of the viral replication machinery to viral DNA origins. In the presence of the major DNA-binding protein, opens dsDNA leading to a conformational change in the origin that facilitates DNA unwinding and subsequent replication. This is Replication origin-binding protein (UL9) from Psittacid herpesvirus 1 (isolate Amazon parrot/-/97-0001/1997) (PsHV-1).